A 275-amino-acid chain; its full sequence is Large ribosomal subunit protein uL2 (275 aa).

Residues 28–38 (RPYDGLLEKKS) show a composition bias toward basic and acidic residues. Disordered stretches follow at residues 28–58 (RPYD…GGGH) and 223–275 (VAMN…RKAK). Basic residues predominate over residues 254-275 (KGHKTRKNKRTDKLIVRRRKAK).

It belongs to the universal ribosomal protein uL2 family. As to quaternary structure, part of the 50S ribosomal subunit. Forms a bridge to the 30S subunit in the 70S ribosome.

Its function is as follows. One of the primary rRNA binding proteins. Required for association of the 30S and 50S subunits to form the 70S ribosome, for tRNA binding and peptide bond formation. It has been suggested to have peptidyltransferase activity; this is somewhat controversial. Makes several contacts with the 16S rRNA in the 70S ribosome. This chain is Large ribosomal subunit protein uL2, found in Chromohalobacter salexigens (strain ATCC BAA-138 / DSM 3043 / CIP 106854 / NCIMB 13768 / 1H11).